The sequence spans 159 residues: Protein-export protein SecB (159 aa).

Belongs to the SecB family. Homotetramer, a dimer of dimers. One homotetramer interacts with 1 SecA dimer.

It is found in the cytoplasm. Its function is as follows. One of the proteins required for the normal export of preproteins out of the cell cytoplasm. It is a molecular chaperone that binds to a subset of precursor proteins, maintaining them in a translocation-competent state. It also specifically binds to its receptor SecA. This chain is Protein-export protein SecB, found in Pseudomonas fluorescens (strain ATCC BAA-477 / NRRL B-23932 / Pf-5).